A 256-amino-acid polypeptide reads, in one-letter code: POU domain class 2-associating factor 1 (256 aa).

The tract at residues 1–24 (MLWQKSTAPEQAPAPPRPYQGVRV) is disordered. An OCA domain is found at 16-38 (PRPYQGVRVKEPVKELLRRKRGH).

It belongs to the POU2AF family. In terms of assembly, interacts with POU2F1/OCT1 and POU2F2/OCT2; the interaction increases POU2F1 and POU2F2 transactivation activity. Post-translationally, ubiquitinated; mediated by SIAH1 or SIAH2 and leading to its subsequent proteasomal degradation. As to expression, B-cell specific.

Its subcellular location is the nucleus. Functionally, transcriptional coactivator that specifically associates with either POU2F1/OCT1 or POU2F2/OCT2. It boosts the POU2F1/OCT1 mediated promoter activity and to a lesser extent, that of POU2F2/OCT2. It recognizes the POU domains of POU2F1/OCT1 and POU2F2/OCT2. It is essential for the response of B-cells to antigens and required for the formation of germinal centers. Regulates IL6 expression in B cells as POU2F2/OCT2 coactivator. The sequence is that of POU domain class 2-associating factor 1 from Mus musculus (Mouse).